The sequence spans 372 residues: Chaperone protein DnaJ (372 aa).

A J domain is found at 5-70 (DFYEVLGVTK…QKRAAYDRYG (66 aa)). The CR-type zinc finger occupies 129 to 207 (GKLASLTLPT…CGGAGRVTRE (79 aa)). Zn(2+) is bound by residues cysteine 142, cysteine 145, cysteine 159, cysteine 162, cysteine 181, cysteine 184, cysteine 195, and cysteine 198. CXXCXGXG motif repeat units lie at residues 142 to 149 (CEACDGTG), 159 to 166 (CPTCGGQG), 181 to 188 (CPQCHGRG), and 195 to 202 (CQACGGAG).

The protein belongs to the DnaJ family. In terms of assembly, homodimer. Zn(2+) serves as cofactor.

It is found in the cytoplasm. Functionally, participates actively in the response to hyperosmotic and heat shock by preventing the aggregation of stress-denatured proteins and by disaggregating proteins, also in an autonomous, DnaK-independent fashion. Unfolded proteins bind initially to DnaJ; upon interaction with the DnaJ-bound protein, DnaK hydrolyzes its bound ATP, resulting in the formation of a stable complex. GrpE releases ADP from DnaK; ATP binding to DnaK triggers the release of the substrate protein, thus completing the reaction cycle. Several rounds of ATP-dependent interactions between DnaJ, DnaK and GrpE are required for fully efficient folding. Also involved, together with DnaK and GrpE, in the DNA replication of plasmids through activation of initiation proteins. This chain is Chaperone protein DnaJ, found in Beijerinckia indica subsp. indica (strain ATCC 9039 / DSM 1715 / NCIMB 8712).